Here is a 410-residue protein sequence, read N- to C-terminus: Arginine deiminase (410 aa).

Catalysis depends on Cys400, which acts as the Amidino-cysteine intermediate.

The protein belongs to the arginine deiminase family.

The protein resides in the cytoplasm. It catalyses the reaction L-arginine + H2O = L-citrulline + NH4(+). It functions in the pathway amino-acid degradation; L-arginine degradation via ADI pathway; carbamoyl phosphate from L-arginine: step 1/2. The protein is Arginine deiminase (arcA) of Borreliella burgdorferi (strain ATCC 35210 / DSM 4680 / CIP 102532 / B31) (Borrelia burgdorferi).